The primary structure comprises 119 residues: Large ribosomal subunit protein bL19 (119 aa).

It belongs to the bacterial ribosomal protein bL19 family.

Its function is as follows. This protein is located at the 30S-50S ribosomal subunit interface and may play a role in the structure and function of the aminoacyl-tRNA binding site. This is Large ribosomal subunit protein bL19 from Treponema denticola (strain ATCC 35405 / DSM 14222 / CIP 103919 / JCM 8153 / KCTC 15104).